We begin with the raw amino-acid sequence, 112 residues long: Cytochrome c (112 aa).

3 residues coordinate heme c: Cys23, Cys26, and His27. Residue Lys81 is modified to N6,N6,N6-trimethyllysine. Met89 contacts heme c. N6,N6,N6-trimethyllysine is present on Lys95.

It belongs to the cytochrome c family. In terms of processing, binds 1 heme c group covalently per subunit.

It is found in the mitochondrion intermembrane space. Its function is as follows. Electron carrier protein. The oxidized form of the cytochrome c heme group can accept an electron from the heme group of the cytochrome c1 subunit of cytochrome reductase. Cytochrome c then transfers this electron to the cytochrome oxidase complex, the final protein carrier in the mitochondrial electron-transport chain. This Arabidopsis thaliana (Mouse-ear cress) protein is Cytochrome c (CC-1).